We begin with the raw amino-acid sequence, 106 residues long: UPF0145 protein FTL_1249 (106 aa).

This sequence belongs to the UPF0145 family.

This Francisella tularensis subsp. holarctica (strain LVS) protein is UPF0145 protein FTL_1249.